Consider the following 276-residue polypeptide: Undecaprenyl-diphosphatase (276 aa).

Transmembrane regions (helical) follow at residues 84–104, 115–135, 188–208, 222–242, and 250–270; these read YRLGWYVIIGTIPICILGLFF, LWVVVTALVVFSGVIALAEYV, FGFLLAIPAVFASGLFSLPDA, QLLVATLIAFVLGLTAVAWLL, and MYWFVGYRVLVGTGMLVLLAT.

The protein belongs to the UppP family.

It is found in the cell membrane. It carries out the reaction di-trans,octa-cis-undecaprenyl diphosphate + H2O = di-trans,octa-cis-undecaprenyl phosphate + phosphate + H(+). Its function is as follows. Catalyzes the dephosphorylation of undecaprenyl diphosphate (UPP). Confers resistance to bacitracin. The protein is Undecaprenyl-diphosphatase of Mycobacterium tuberculosis (strain ATCC 25177 / H37Ra).